The sequence spans 286 residues: 1D-myo-inositol 2-acetamido-2-deoxy-alpha-D-glucopyranoside deacetylase (286 aa).

His-12, Asp-15, and His-147 together coordinate Zn(2+).

Belongs to the MshB deacetylase family. The cofactor is Zn(2+).

It catalyses the reaction 1D-myo-inositol 2-acetamido-2-deoxy-alpha-D-glucopyranoside + H2O = 1D-myo-inositol 2-amino-2-deoxy-alpha-D-glucopyranoside + acetate. Catalyzes the deacetylation of 1D-myo-inositol 2-acetamido-2-deoxy-alpha-D-glucopyranoside (GlcNAc-Ins) in the mycothiol biosynthesis pathway. This is 1D-myo-inositol 2-acetamido-2-deoxy-alpha-D-glucopyranoside deacetylase from Thermobifida fusca (strain YX).